Consider the following 383-residue polypeptide: ATP phosphoribosyltransferase regulatory subunit (383 aa).

This sequence belongs to the class-II aminoacyl-tRNA synthetase family. HisZ subfamily. In terms of assembly, heteromultimer composed of HisG and HisZ subunits.

It localises to the cytoplasm. It participates in amino-acid biosynthesis; L-histidine biosynthesis; L-histidine from 5-phospho-alpha-D-ribose 1-diphosphate: step 1/9. Functionally, required for the first step of histidine biosynthesis. May allow the feedback regulation of ATP phosphoribosyltransferase activity by histidine. The sequence is that of ATP phosphoribosyltransferase regulatory subunit from Cupriavidus taiwanensis (strain DSM 17343 / BCRC 17206 / CCUG 44338 / CIP 107171 / LMG 19424 / R1) (Ralstonia taiwanensis (strain LMG 19424)).